The following is a 151-amino-acid chain: MSTTREKLLATTTKFVSAFGSFDIEEMLNIRTPTCLYHQCCPSFDKNVVTNEETRASFPQFIATFKRFDFSILEPDHTLVDEAARKVMIRAKTSAESIVGAYENEYIFILKMTDDCRLIEEIHEFYDTIRLKDLQHRLEANRISFGDAAPF.

It belongs to the trt14 isomerase family. In terms of assembly, homodimer.

It participates in secondary metabolite biosynthesis; terpenoid biosynthesis. In terms of biological role, part of the gene cluster B that mediates the biosynthesis of the fungal meroterpenoid acetoxydehydroaustin. The first step of the pathway is the synthesis of 3,5-dimethylorsellinic acid by the polyketide synthase ausA. 3,5-dimethylorsellinic acid is then prenylated by the polyprenyl transferase ausN. Further epoxidation by the FAD-dependent monooxygenase ausM and cyclization by the probable terpene cyclase ausL lead to the formation of protoaustinoid A. Protoaustinoid A is then oxidized to spiro-lactone preaustinoid A3 by the combined action of the FAD-binding monooxygenases ausB and ausC, and the dioxygenase ausE. Acid-catalyzed keto-rearrangement and ring contraction of the tetraketide portion of preaustinoid A3 by ausJ lead to the formation of preaustinoid A4. The aldo-keto reductase ausK, with the help of ausH, is involved in the next step by transforming preaustinoid A4 into isoaustinone which is in turn hydroxylated by the P450 monooxygenase ausI to form austinolide. The cytochrome P450 monooxygenase ausG then modifies austinolide to austinol. Austinol is further acetylated to austin by the O-acetyltransferase ausP, which spontaneously changes to dehydroaustin. The cytochrome P450 monooxygenase then converts dehydroaustin is into 7-dehydrodehydroaustin. The hydroxylation catalyzed by ausR permits the second O-acetyltransferase ausQ to add an additional acetyl group to the molecule, leading to the formation of acetoxydehydroaustin. Due to genetic rearrangements of the clusters and the subsequent loss of some enzymes, the end product of the Penicillium brasilianum austinoid biosynthesis clusters is acetoxydehydroaustin. The sequence is that of Austinoid biosynthesis clusters protein F from Penicillium brasilianum.